Consider the following 1262-residue polypeptide: ATP-dependent helicase/nuclease subunit A (1262 aa).

The UvrD-like helicase ATP-binding domain maps to 5–476 (FSFTPSQDQA…IVLAENFRSM (472 aa)). Residue 26-33 (ASAGSGKT) coordinates ATP. The 294-residue stretch at 515-808 (DTVTSTAELL…SVMTIHGSKG (294 aa)) folds into the UvrD-like helicase C-terminal domain.

It belongs to the helicase family. AddA subfamily. In terms of assembly, heterodimer of AddA and AddB/RexB. The cofactor is Mg(2+).

It carries out the reaction Couples ATP hydrolysis with the unwinding of duplex DNA by translocating in the 3'-5' direction.. The catalysed reaction is ATP + H2O = ADP + phosphate + H(+). Functionally, the heterodimer acts as both an ATP-dependent DNA helicase and an ATP-dependent, dual-direction single-stranded exonuclease. Recognizes the chi site generating a DNA molecule suitable for the initiation of homologous recombination. The AddA nuclease domain is required for chi fragment generation; this subunit has the helicase and 3' -&gt; 5' nuclease activities. The chain is ATP-dependent helicase/nuclease subunit A from Levilactobacillus brevis (strain ATCC 367 / BCRC 12310 / CIP 105137 / JCM 1170 / LMG 11437 / NCIMB 947 / NCTC 947) (Lactobacillus brevis).